The primary structure comprises 174 residues: Shikimate kinase (174 aa).

Position 15 to 20 (15 to 20 (GTGKST)) interacts with ATP. Serine 19 contacts Mg(2+). Substrate-binding residues include aspartate 37, arginine 61, and glycine 82. Arginine 120 contributes to the ATP binding site. Arginine 138 lines the substrate pocket.

This sequence belongs to the shikimate kinase family. Monomer. Requires Mg(2+) as cofactor.

Its subcellular location is the cytoplasm. It catalyses the reaction shikimate + ATP = 3-phosphoshikimate + ADP + H(+). It participates in metabolic intermediate biosynthesis; chorismate biosynthesis; chorismate from D-erythrose 4-phosphate and phosphoenolpyruvate: step 5/7. Catalyzes the specific phosphorylation of the 3-hydroxyl group of shikimic acid using ATP as a cosubstrate. This is Shikimate kinase from Staphylococcus aureus (strain MRSA252).